The sequence spans 77 residues: Serine protease inhibitor 3 (77 aa).

Residues 1-17 (MMFTPLIVLTLLVLATA) form the signal peptide. 4 cysteine pairs are disulfide-bonded: Cys21/Cys53, Cys30/Cys48, Cys33/Cys44, and Cys55/Cys68. The TIL domain occupies 21 to 74 (CGPNEQWSGCPKCELQSGESDKPCATICGEPKCYCSPDKYRRIPDGRCIRKIQC).

The protein localises to the secreted. In terms of biological role, defends the organism against the host's proteinases. The protein is Serine protease inhibitor 3 of Anisakis simplex (Herring worm).